The following is a 498-amino-acid chain: ATP synthase subunit beta, chloroplastic (498 aa).

172–179 contributes to the ATP binding site; that stretch reads GGAGVGKT.

Belongs to the ATPase alpha/beta chains family. F-type ATPases have 2 components, CF(1) - the catalytic core - and CF(0) - the membrane proton channel. CF(1) has five subunits: alpha(3), beta(3), gamma(1), delta(1), epsilon(1). CF(0) has four main subunits: a(1), b(1), b'(1) and c(9-12).

The protein localises to the plastid. Its subcellular location is the chloroplast thylakoid membrane. It catalyses the reaction ATP + H2O + 4 H(+)(in) = ADP + phosphate + 5 H(+)(out). Its function is as follows. Produces ATP from ADP in the presence of a proton gradient across the membrane. The catalytic sites are hosted primarily by the beta subunits. The protein is ATP synthase subunit beta, chloroplastic of Liriodendron tulipifera (Tuliptree).